The following is a 383-amino-acid chain: Dihydroorotase (383 aa).

Zn(2+) is bound by residues histidine 47 and histidine 49. Substrate contacts are provided by residues 49-51 (HFR) and asparagine 81. 4 residues coordinate Zn(2+): lysine 128, histidine 159, histidine 198, and aspartate 264. Lysine 128 bears the N6-carboxylysine mark. Aspartate 264 is a catalytic residue. Residues histidine 268 and 280-281 (PG) contribute to the substrate site.

The protein belongs to the metallo-dependent hydrolases superfamily. DHOase family. Class I DHOase subfamily. Zn(2+) serves as cofactor.

It carries out the reaction (S)-dihydroorotate + H2O = N-carbamoyl-L-aspartate + H(+). It functions in the pathway pyrimidine metabolism; UMP biosynthesis via de novo pathway; (S)-dihydroorotate from bicarbonate: step 3/3. Catalyzes the reversible cyclization of carbamoyl aspartate to dihydroorotate. This chain is Dihydroorotase, found in Pyrobaculum aerophilum (strain ATCC 51768 / DSM 7523 / JCM 9630 / CIP 104966 / NBRC 100827 / IM2).